The primary structure comprises 919 residues: Isoleucine--tRNA ligase (919 aa).

A 'HIGH' region motif is present at residues 59–69; that stretch reads PYANGHLHIGH. E570 contacts L-isoleucyl-5'-AMP. Positions 611–615 match the 'KMSKS' region motif; that stretch reads KMSKS. K614 provides a ligand contact to ATP. Zn(2+) is bound by residues C893, C896, C908, and C911.

The protein belongs to the class-I aminoacyl-tRNA synthetase family. IleS type 1 subfamily. In terms of assembly, monomer. Zn(2+) serves as cofactor.

The protein resides in the cytoplasm. It catalyses the reaction tRNA(Ile) + L-isoleucine + ATP = L-isoleucyl-tRNA(Ile) + AMP + diphosphate. In terms of biological role, catalyzes the attachment of isoleucine to tRNA(Ile). As IleRS can inadvertently accommodate and process structurally similar amino acids such as valine, to avoid such errors it has two additional distinct tRNA(Ile)-dependent editing activities. One activity is designated as 'pretransfer' editing and involves the hydrolysis of activated Val-AMP. The other activity is designated 'posttransfer' editing and involves deacylation of mischarged Val-tRNA(Ile). The chain is Isoleucine--tRNA ligase from Campylobacter curvus (strain 525.92).